A 382-amino-acid chain; its full sequence is Galactokinase (382 aa).

34–37 (EHTD) contacts substrate. Residue 124-130 (GAGLSSS) participates in ATP binding. 2 residues coordinate Mg(2+): Ser130 and Glu162. Residue Asp174 is the Proton acceptor of the active site. A substrate-binding site is contributed by Tyr223.

The protein belongs to the GHMP kinase family. GalK subfamily.

Its subcellular location is the cytoplasm. It catalyses the reaction alpha-D-galactose + ATP = alpha-D-galactose 1-phosphate + ADP + H(+). It participates in carbohydrate metabolism; galactose metabolism. Catalyzes the transfer of the gamma-phosphate of ATP to D-galactose to form alpha-D-galactose-1-phosphate (Gal-1-P). The polypeptide is Galactokinase (Escherichia coli O1:K1 / APEC).